We begin with the raw amino-acid sequence, 179 residues long: ATP-dependent protease subunit HslV (179 aa).

T5 is a catalytic residue. The Na(+) site is built by G164, C167, and T170.

Belongs to the peptidase T1B family. HslV subfamily. A double ring-shaped homohexamer of HslV is capped on each side by a ring-shaped HslU homohexamer. The assembly of the HslU/HslV complex is dependent on binding of ATP.

Its subcellular location is the cytoplasm. It catalyses the reaction ATP-dependent cleavage of peptide bonds with broad specificity.. With respect to regulation, allosterically activated by HslU binding. Its function is as follows. Protease subunit of a proteasome-like degradation complex believed to be a general protein degrading machinery. The polypeptide is ATP-dependent protease subunit HslV (Verminephrobacter eiseniae (strain EF01-2)).